A 389-amino-acid polypeptide reads, in one-letter code: Formate-dependent phosphoribosylglycinamide formyltransferase (389 aa).

Residues 15-16 (EL) and E75 each bind N(1)-(5-phospho-beta-D-ribosyl)glycinamide. Residues R107, K148, 153 to 158 (SSGKGQ), 188 to 191 (EEFL), and E196 contribute to the ATP site. An ATP-grasp domain is found at 112–302 (NLAAGELGLR…EFDLHLRAVL (191 aa)). Positions 261 and 273 each coordinate Mg(2+). N(1)-(5-phospho-beta-D-ribosyl)glycinamide-binding positions include D280, K350, and 357–358 (RR).

This sequence belongs to the PurK/PurT family. In terms of assembly, homodimer.

The enzyme catalyses N(1)-(5-phospho-beta-D-ribosyl)glycinamide + formate + ATP = N(2)-formyl-N(1)-(5-phospho-beta-D-ribosyl)glycinamide + ADP + phosphate + H(+). It participates in purine metabolism; IMP biosynthesis via de novo pathway; N(2)-formyl-N(1)-(5-phospho-D-ribosyl)glycinamide from N(1)-(5-phospho-D-ribosyl)glycinamide (formate route): step 1/1. Its function is as follows. Involved in the de novo purine biosynthesis. Catalyzes the transfer of formate to 5-phospho-ribosyl-glycinamide (GAR), producing 5-phospho-ribosyl-N-formylglycinamide (FGAR). Formate is provided by PurU via hydrolysis of 10-formyl-tetrahydrofolate. This chain is Formate-dependent phosphoribosylglycinamide formyltransferase, found in Synechococcus sp. (strain CC9311).